A 403-amino-acid chain; its full sequence is Prostaglandin E2 receptor EP1 subtype (403 aa).

Residues 1-38 are Extracellular-facing; it reads MSLCGPLNLSLAGEATPCAEPGAPNASAWPPSGRASAS. N-linked (GlcNAc...) asparagine glycans are attached at residues N8 and N25. Residues 39-65 traverse the membrane as a helical segment; it reads PALPIFSMTLGAVSNVLALALLAQAAG. Over 66 to 75 the chain is Cytoplasmic; that stretch reads RLRRRRSAAT. Residues 76 to 99 traverse the membrane as a helical segment; that stretch reads FLLFVASLLATDLAGHVIPGALVL. Residues 100-114 are Extracellular-facing; that stretch reads RLYAAGRSPAGGACH. Cysteines 113 and 191 form a disulfide. The chain crosses the membrane as a helical span at residues 115 to 136; the sequence is FLGGCMVFFGLCPLLLGCGMAV. At 137-158 the chain is on the cytoplasmic side; that stretch reads ERCVGVTRPLLHAARVSAARAR. Residues 159–180 form a helical membrane-spanning segment; it reads LALAVLAALALAVALLPLARVG. Over 181–204 the chain is Extracellular; it reads RYELQYPGTWCFIGLRPAGGWRQA. Residues 205-230 traverse the membrane as a helical segment; sequence LLAGLFAGLGLAALLAALVCNTLSGL. At 231–295 the chain is on the cytoplasmic side; sequence ALLRARWRRR…ARRARAHDVE (65 aa). The interval 243–287 is disordered; the sequence is RRRPQACGPDGRRHWGARAPRSASASSSSSVASVPGGSPGRGSAR. Residues 259–278 show a composition bias toward low complexity; that stretch reads ARAPRSASASSSSSVASVPG. The chain crosses the membrane as a helical span at residues 296-322; sequence MVGQLVGIMVVSCICWSPLLVLVVLAV. At 323-333 the chain is on the extracellular side; the sequence is GGWGSSSLQRP. The helical transmembrane segment at 334 to 355 threads the bilayer; sequence LFLAVRLASWNQILDPWVYILL. The Cytoplasmic segment spans residues 356–403; the sequence is RQAVLRQLLRLLPPRPGAKGSPAGLALTRSAWEASSLRSSRHSSLSHL.

The protein belongs to the G-protein coupled receptor 1 family.

Its subcellular location is the cell membrane. Its function is as follows. Receptor for prostaglandin E2 (PGE2). The activity of this receptor is mediated by G(q) proteins which activate a phosphatidylinositol-calcium second messenger system. May play a role as an important modulator of renal function. Implicated the smooth muscle contractile response to PGE2 in various tissues. The chain is Prostaglandin E2 receptor EP1 subtype (PTGER1) from Canis lupus familiaris (Dog).